A 156-amino-acid chain; its full sequence is Ribosomal RNA large subunit methyltransferase H (156 aa).

S-adenosyl-L-methionine is bound by residues glycine 104 and 123–128; that span reads LSAMTL.

The protein belongs to the RNA methyltransferase RlmH family. In terms of assembly, homodimer.

The protein resides in the cytoplasm. The catalysed reaction is pseudouridine(1915) in 23S rRNA + S-adenosyl-L-methionine = N(3)-methylpseudouridine(1915) in 23S rRNA + S-adenosyl-L-homocysteine + H(+). Specifically methylates the pseudouridine at position 1915 (m3Psi1915) in 23S rRNA. The protein is Ribosomal RNA large subunit methyltransferase H of Chromobacterium violaceum (strain ATCC 12472 / DSM 30191 / JCM 1249 / CCUG 213 / NBRC 12614 / NCIMB 9131 / NCTC 9757 / MK).